Here is a 203-residue protein sequence, read N- to C-terminus: Nucleoside triphosphate pyrophosphatase (203 aa).

The active-site Proton acceptor is the Asp80.

This sequence belongs to the Maf family. It depends on a divalent metal cation as a cofactor.

Its subcellular location is the cytoplasm. It carries out the reaction a ribonucleoside 5'-triphosphate + H2O = a ribonucleoside 5'-phosphate + diphosphate + H(+). The catalysed reaction is a 2'-deoxyribonucleoside 5'-triphosphate + H2O = a 2'-deoxyribonucleoside 5'-phosphate + diphosphate + H(+). Its function is as follows. Nucleoside triphosphate pyrophosphatase. May have a dual role in cell division arrest and in preventing the incorporation of modified nucleotides into cellular nucleic acids. The protein is Nucleoside triphosphate pyrophosphatase of Gluconobacter oxydans (strain 621H) (Gluconobacter suboxydans).